The following is a 123-amino-acid chain: Sterol carrier protein 2 (123 aa).

An SCP2 domain is found at 16–113 (KEHLSTDAGK…GSLSAAQKFT (98 aa)). The short motif at 121-123 (SKL) is the Microbody targeting signal element.

Expressed in most tissues including seedlings, cotyledons, inflorescence, leaves, stems, roots, siliques and flower buds, with the highest levels in floral tissues and in maturing seeds.

It is found in the peroxisome. Enhances the transfer of lipids between membranes in vitro. Active on phosphatidylcholine (PC), 1-palmitoyl 2-oleoyl phosphatidylcholine (POPC) and ergosterol, and, to a lower extent, dimyristoyl phosphatidic acid, stigmasterol, desmosterol, beta-sitosterol and steryl glucoside. Inactive or poorly active on palmitic acid, stearoyl-coenzyme A, cholesterol, glucosylceramide and ceramide. Required during seeds and seedlings development. The chain is Sterol carrier protein 2 from Arabidopsis thaliana (Mouse-ear cress).